The primary structure comprises 123 residues: Phosphoribosyl-AMP cyclohydrolase (123 aa).

Mg(2+) is bound at residue Asp76. Cys77 lines the Zn(2+) pocket. The Mg(2+) site is built by Asp78 and Asp80. Zn(2+) is bound by residues Cys93 and Cys100.

The protein belongs to the PRA-CH family. As to quaternary structure, homodimer. Mg(2+) is required as a cofactor. It depends on Zn(2+) as a cofactor.

It is found in the cytoplasm. The catalysed reaction is 1-(5-phospho-beta-D-ribosyl)-5'-AMP + H2O = 1-(5-phospho-beta-D-ribosyl)-5-[(5-phospho-beta-D-ribosylamino)methylideneamino]imidazole-4-carboxamide. It participates in amino-acid biosynthesis; L-histidine biosynthesis; L-histidine from 5-phospho-alpha-D-ribose 1-diphosphate: step 3/9. Its function is as follows. Catalyzes the hydrolysis of the adenine ring of phosphoribosyl-AMP. This chain is Phosphoribosyl-AMP cyclohydrolase, found in Methanocorpusculum labreanum (strain ATCC 43576 / DSM 4855 / Z).